The following is a 511-amino-acid chain: Lysine--tRNA ligase (511 aa).

Mg(2+)-binding residues include Glu-403 and Glu-410.

This sequence belongs to the class-II aminoacyl-tRNA synthetase family. As to quaternary structure, homodimer. The cofactor is Mg(2+).

Its subcellular location is the cytoplasm. It carries out the reaction tRNA(Lys) + L-lysine + ATP = L-lysyl-tRNA(Lys) + AMP + diphosphate. This chain is Lysine--tRNA ligase, found in Onion yellows phytoplasma (strain OY-M).